Here is a 180-residue protein sequence, read N- to C-terminus: MIEIRFHGRGGQGAVTAAEILAKAAFEDGKYSQAFPFFGVERRGAPVMAFTRIDDSPVRRRYQVYNPDYVVVLDEGLVDVVDVFSGLKDDGVVVLNKSGDFQGGDVKVHTIDATGIALETLGRPIVNTVMLGAFAGVTGLVSIDSLIKIIKETFPGKIGEKNAEAARMAYEEIEKLRVNM.

In terms of assembly, heterotetramer of one alpha, one beta, one delta and one gamma chain.

It carries out the reaction 2 oxidized [2Fe-2S]-[ferredoxin] + pyruvate + CoA = 2 reduced [2Fe-2S]-[ferredoxin] + acetyl-CoA + CO2 + H(+). In Methanothermobacter thermautotrophicus (strain ATCC 29096 / DSM 1053 / JCM 10044 / NBRC 100330 / Delta H) (Methanobacterium thermoautotrophicum), this protein is Pyruvate synthase subunit PorC (porC).